Here is a 495-residue protein sequence, read N- to C-terminus: Leucine aminopeptidase 2 (495 aa).

The first 21 residues, 1-21 (MKTQLLSLGVALTAISQGVIA), serve as a signal peptide directing secretion. In terms of domain architecture, PA spans 124 to 218 (PPADKITAEL…ADGKNLASLV (95 aa)). Residues Asn-142 and Asn-235 are each glycosylated (N-linked (GlcNAc...) asparagine). 2 residues coordinate Zn(2+): His-259 and Asp-271. Asn-272 is a glycosylation site (N-linked (GlcNAc...) asparagine). Glu-303 (proton acceptor) is an active-site residue. Residues Glu-304 and Asp-332 each coordinate Zn(2+). Residue Asn-352 is glycosylated (N-linked (GlcNAc...) asparagine). His-430 serves as a coordination point for Zn(2+). The tract at residues 464 to 495 (GFPTRPKTGKRDVSPRGQSMPGGGCGHHSVFM) is disordered.

This sequence belongs to the peptidase M28 family. M28A subfamily. As to quaternary structure, monomer. The cofactor is Zn(2+).

It is found in the secreted. Functionally, extracellular aminopeptidase that releases a wide variety of amino acids from natural peptides and contributes to pathogenicity. This Arthroderma otae (strain ATCC MYA-4605 / CBS 113480) (Microsporum canis) protein is Leucine aminopeptidase 2 (LAP2).